The primary structure comprises 104 residues: Protein S100-A14 (104 aa).

Residues 27–61 enclose the EF-hand domain; that stretch reads KNFHQYSVEGGKETLTPSELRDLVTQQLPHLMPSN.

Belongs to the S-100 family. As to quaternary structure, homodimer. Interacts with AGER. In terms of tissue distribution, expressed at highest levels in colon and at moderate levels in thymus, kidney, liver, small intestine, and lung. Low expression in heart and no expression is seen in brain, skeletal muscle, spleen, placenta and peripheral blood leukocytes.

Its subcellular location is the cytoplasm. Its function is as follows. Modulates P53/TP53 protein levels, and thereby plays a role in the regulation of cell survival and apoptosis. Depending on the context, it can promote cell proliferation or apoptosis. Plays a role in the regulation of cell migration by modulating the levels of MMP2, a matrix protease that is under transcriptional control of P53/TP53. Does not bind calcium. The chain is Protein S100-A14 (S100A14) from Homo sapiens (Human).